We begin with the raw amino-acid sequence, 174 residues long: ATP-dependent protease subunit HslV (174 aa).

Thr-2 is a catalytic residue. Na(+) is bound by residues Gly-157, Asp-160, and Thr-163.

It belongs to the peptidase T1B family. HslV subfamily. A double ring-shaped homohexamer of HslV is capped on each side by a ring-shaped HslU homohexamer. The assembly of the HslU/HslV complex is dependent on binding of ATP.

The protein resides in the cytoplasm. It carries out the reaction ATP-dependent cleavage of peptide bonds with broad specificity.. Its activity is regulated as follows. Allosterically activated by HslU binding. In terms of biological role, protease subunit of a proteasome-like degradation complex believed to be a general protein degrading machinery. The chain is ATP-dependent protease subunit HslV from Aliivibrio fischeri (strain MJ11) (Vibrio fischeri).